A 225-amino-acid chain; its full sequence is MSDTEAPVEVQEDFEVVEEFTPVVLATPIPEEVQQAQTEIKLFNKWSFEEVEVKDASLVDYVQVRQPIFVAHTAGRYANKRFRKAQCPIIERLTNSLMMNGRNNGKKLKAVRIIKHTLDIINVLTDQNPIQVVVDAITNTGPREDTTRVGGGGAARRQAVDVSPLRRVNQAIALLTIGAREAAFRNIKTIAETLAEELINAAKGSSTSYAIKKKDELERVAKSNR.

N-acetylserine is present on serine 2. At threonine 27 the chain carries Phosphothreonine. Residues lysine 45 and lysine 203 each participate in a glycyl lysine isopeptide (Lys-Gly) (interchain with G-Cter in ubiquitin) cross-link.

It belongs to the universal ribosomal protein uS7 family. Component of the small ribosomal subunit (SSU). Mature yeast ribosomes consist of a small (40S) and a large (60S) subunit. The 40S small subunit contains 1 molecule of ribosomal RNA (18S rRNA) and 33 different proteins (encoded by 57 genes). The large 60S subunit contains 3 rRNA molecules (25S, 5.8S and 5S rRNA) and 46 different proteins (encoded by 81 genes). N-terminally acetylated by acetyltransferase NatA.

Its subcellular location is the cytoplasm. Functionally, component of the ribosome, a large ribonucleoprotein complex responsible for the synthesis of proteins in the cell. The small ribosomal subunit (SSU) binds messenger RNAs (mRNAs) and translates the encoded message by selecting cognate aminoacyl-transfer RNA (tRNA) molecules. The large subunit (LSU) contains the ribosomal catalytic site termed the peptidyl transferase center (PTC), which catalyzes the formation of peptide bonds, thereby polymerizing the amino acids delivered by tRNAs into a polypeptide chain. The nascent polypeptides leave the ribosome through a tunnel in the LSU and interact with protein factors that function in enzymatic processing, targeting, and the membrane insertion of nascent chains at the exit of the ribosomal tunnel. This is Small ribosomal subunit protein uS7 from Saccharomyces cerevisiae (strain ATCC 204508 / S288c) (Baker's yeast).